Consider the following 30-residue polypeptide: Brevinin-2PTa (30 aa).

Cys24 and Cys30 are oxidised to a cystine.

Expressed by the skin glands.

The protein resides in the secreted. Functionally, has antibacterial activity against the Gram-positive bacterium S.aureus ATCC 25923 (MIC=18 uM) and the Gram-negative bacterium E.coli ATCC 25726 (MIC=18 uM). In Pulchrana picturata (Malaysian fire frog), this protein is Brevinin-2PTa.